The following is a 415-amino-acid chain: Putative F-box/FBD/LRR-repeat protein At3g49040 (415 aa).

The F-box domain maps to 10-58; that stretch reads EDRISELHEALLVHIMSSLPTKTVVATSVLSKRWRHVWKTVQNLKFVSK. LRR repeat units lie at residues 60-86, 87-114, 143-170, 171-196, and 213-241; these read HQTFSEDVYRFFMLHKAPFLESLDLEF, SNQLDASDLGILVGIAFARHVRNLVLDL, TLTLKHSILLYFPYRVCLKSLRKLHLYK, VHFYGKDSVYNLLCGCPSLRDLIVHR, and RLTIEDSGFGYGCCYVINAPSLKYLNIRR. An FBD domain is found at 272–377; the sequence is ILESLTSAKR…TSLKKATFST (106 aa).

In Arabidopsis thaliana (Mouse-ear cress), this protein is Putative F-box/FBD/LRR-repeat protein At3g49040.